Here is a 244-residue protein sequence, read N- to C-terminus: SPX domain-containing protein 6 (244 aa).

Positions 1–147 (MKFGKLLKRQ…GGALAAPVAE (147 aa)) constitute an SPX domain. The tract at residues 212–244 (GSSTHGRHSLPPLTLPDSDWLRSFQPPSPIPIQ) is disordered.

This chain is SPX domain-containing protein 6 (SPX6), found in Oryza sativa subsp. indica (Rice).